The sequence spans 380 residues: Alpha-glucoside transport system permease protein AglG (380 aa).

6 helical membrane-spanning segments follow: residues 13-33, 179-199, 202-222, 239-259, 288-308, and 344-364; these read VHLSVLLLVLLWTLPTAGLLI, VIPILIAAFAAYALAWMPFPG, VLLAVVVGLLVVPLQMSLIPL, TYMGIWLAHTGFGLPLAIYLL, IILPLSFPALASFAIFQFLWT, and EILTASAFITIVVPLIVFFAL. The ABC transmembrane type-1 domain occupies 167 to 364; that stretch reads FLNSLTVAVP…VVPLIVFFAL (198 aa).

The protein belongs to the binding-protein-dependent transport system permease family. MalFG subfamily.

The protein localises to the cell inner membrane. Functionally, part of the binding-protein-dependent transport system for alpha-glucosides such as sucrose, maltose and trehalose. Probably responsible for the translocation of the substrate across the membrane. This Rhizobium meliloti (strain 1021) (Ensifer meliloti) protein is Alpha-glucoside transport system permease protein AglG (aglG).